Consider the following 320-residue polypeptide: Phosphoribosylaminoimidazole-succinocarboxamide synthase (320 aa).

The tract at residues 283–303 is disordered; sequence ESDWDRNSPPPPLPESIAHQT.

The protein belongs to the SAICAR synthetase family.

It catalyses the reaction 5-amino-1-(5-phospho-D-ribosyl)imidazole-4-carboxylate + L-aspartate + ATP = (2S)-2-[5-amino-1-(5-phospho-beta-D-ribosyl)imidazole-4-carboxamido]succinate + ADP + phosphate + 2 H(+). It participates in purine metabolism; IMP biosynthesis via de novo pathway; 5-amino-1-(5-phospho-D-ribosyl)imidazole-4-carboxamide from 5-amino-1-(5-phospho-D-ribosyl)imidazole-4-carboxylate: step 1/2. The sequence is that of Phosphoribosylaminoimidazole-succinocarboxamide synthase from Rhodopirellula baltica (strain DSM 10527 / NCIMB 13988 / SH1).